Reading from the N-terminus, the 684-residue chain is Acetophenone carboxylase delta subunit (684 aa).

Belongs to the oxoprolinase family. As to quaternary structure, acetophenone carboxylase consists of five subunits; a heterooctameric subcomplex of two alpha (Apc1), two beta (Apc2), two gamma (Apc3) and two delta (Apc4) subunits assembles with the epsilon (Apc5) subunit in an unknown stoichiometry. The cofactor is Mg(2+). Requires Mn(2+) as cofactor.

The protein localises to the cytoplasm. The catalysed reaction is acetophenone + hydrogencarbonate + 2 ATP + H2O = 3-oxo-3-phenylpropanoate + 2 ADP + 2 phosphate + 2 H(+). Its activity is regulated as follows. Inhibited by zinc ions, carbamoylphosphate and beta,gamma-imido-ATP. Its function is as follows. Catalyzes the carboxylation of acetophenone to form 3-oxo-3-phenylpropanoate (benzoylacetate) in the anaerobic catabolism of ethylbenzene. Also carboxylates propiophenone at the same rate and 4-acetyl-pyridine at lower rates. The polypeptide is Acetophenone carboxylase delta subunit (apc4) (Aromatoleum aromaticum (strain DSM 19018 / LMG 30748 / EbN1) (Azoarcus sp. (strain EbN1))).